The sequence spans 295 residues: Structure-specific endonuclease subunit SLX1 (295 aa).

The region spanning 11–93 (EFYGVYILQS…QHPKTSRHMA (83 aa)) is the GIY-YIG domain. Residues 85–133 (HPKTSRHMAGGGGSVTATAETAKSAPVAGKSDATSPAKNRRNAAPVARS) are disordered. An SLX1-type zinc finger spans residues 205–272 (CCLCSDAIDY…IPSDVSCSQC (68 aa)).

This sequence belongs to the SLX1 family. In terms of assembly, forms a heterodimer with SLX4. A divalent metal cation is required as a cofactor.

It localises to the nucleus. Catalytic subunit of the SLX1-SLX4 structure-specific endonuclease that resolves DNA secondary structures generated during DNA repair and recombination. Has endonuclease activity towards branched DNA substrates, introducing single-strand cuts in duplex DNA close to junctions with ss-DNA. This is Structure-specific endonuclease subunit SLX1 from Meyerozyma guilliermondii (strain ATCC 6260 / CBS 566 / DSM 6381 / JCM 1539 / NBRC 10279 / NRRL Y-324) (Yeast).